The following is a 725-amino-acid chain: MGSQNSDDDSGSSGSSRSGSRSVTPQGGSAPGSQRSRRSGSGSDRSRSGSRSSRSRSGSGSPRSARSGSAESRHSQLSGSARSKRSRSAHSRRSGSARSRKSGTPESPQSHRSGSLQSRKSGSPQSRRSGSPQSRKSGSTHSRRSGSAHSRRSGSARSRKSGSAQSDRSESRSRSHSGSLKGNEESRSNSPNLQIDVERANSKSGSRSRSRSRSGSRTSRSRSKTGTPSPNRSRSGSASGSGSDVGVPKKKARKASGSDQEKKKSGSDSDIEESPTKAKKSRLIDTDSDSNQDVGKKAPAAADIFGDADDISDDEDEAGPAARKSPVRSKSRSQSKSHSHSRSMSHSRSRSRSRSRDKVESQVESAPKEDEPEPLPETRIDVEIPRISADLGKEQHFIKLPNFLSVVTHPFDPETYEDEIDEEETMDEEGRQRIKLKVSNTIRWREYMNNKGDMVRESNARFVRWSDGSMSLHLGNEIFDAYRQPLLGDHNHLFVRQGTGLQGQSVFRTKLTFRPHSTESFTHKKMTMSLADRSSKTSGIKILTQVGKDPTTDRPTQLREEEAKLRQAMRNQHKSLPKKKKPGAGEPLIGGGTSSYQHDEGSDDENAISLSAIKNRYKKGSGAGQAEVKASTIYSSDEDEGSDFEARRSKKVDKAKASKALRDSDSESDAGSAKSGHSNKSGGEGGSASGSENEGSQKSGGGSSKSASGSGSGSGSGSGSGSDND.

Residues 1-10 (MGSQNSDDDS) show a composition bias toward acidic residues. Disordered stretches follow at residues 1-379 (MGSQ…PETR), 566-603 (RQAM…EGSD), and 617-725 (YKKG…SDND). A compositionally biased stretch (low complexity) spans 11-70 (GSSGSSRSGSRSVTPQGGSAPGSQRSRRSGSGSDRSRSGSRSSRSRSGSGSPRSARSGSA). Basic residues predominate over residues 82 to 101 (RSKRSRSAHSRRSGSARSRK). Over residues 104–116 (TPESPQSHRSGSL) the composition is skewed to polar residues. The segment covering 117–140 (QSRKSGSPQSRRSGSPQSRKSGST) has biased composition (low complexity). Positions 141 to 160 (HSRRSGSAHSRRSGSARSRK) are enriched in basic residues. S175, S186, S188, and S190 each carry phosphoserine. The segment covering 206 to 223 (SRSRSRSRSGSRTSRSRS) has biased composition (basic residues). Low complexity predominate over residues 224-242 (KTGTPSPNRSRSGSASGSG). A phosphoserine mark is found at S265, S267, and S269. T286 bears the Phosphothreonine mark. Phosphoserine is present on residues S288, S290, and S312. A compositionally biased stretch (acidic residues) spans 306-318 (GDADDISDDEDEA). Basic residues predominate over residues 325-353 (SPVRSKSRSQSKSHSHSRSMSHSRSRSRS). Over residues 354–369 (RSRDKVESQVESAPKE) the composition is skewed to basic and acidic residues. The residue at position 355 (S355) is a Phosphoserine. Over residues 571–582 (NQHKSLPKKKKP) the composition is skewed to basic residues. At T593 the chain carries Phosphothreonine. Phosphoserine is present on residues S595, S602, and S631. T632 carries the post-translational modification Phosphothreonine. S635, S636, and S642 each carry phosphoserine. Basic and acidic residues predominate over residues 644 to 665 (FEARRSKKVDKAKASKALRDSD). A compositionally biased stretch (gly residues) spans 710 to 725 (SGSGSGSGSGSGSDND).

This is Another transcription unit protein (Atu) from Drosophila melanogaster (Fruit fly).